The following is a 213-amino-acid chain: Kynurenine formamidase (213 aa).

Substrate is bound at residue W18. 3 residues coordinate Zn(2+): H48, H52, and D54. The Proton donor/acceptor role is filled by H58. Zn(2+)-binding residues include H160 and E172.

The protein belongs to the Cyclase 1 superfamily. KynB family. Homodimer. It depends on Zn(2+) as a cofactor.

It carries out the reaction N-formyl-L-kynurenine + H2O = L-kynurenine + formate + H(+). The protein operates within amino-acid degradation; L-tryptophan degradation via kynurenine pathway; L-kynurenine from L-tryptophan: step 2/2. Functionally, catalyzes the hydrolysis of N-formyl-L-kynurenine to L-kynurenine, the second step in the kynurenine pathway of tryptophan degradation. The protein is Kynurenine formamidase of Burkholderia lata (strain ATCC 17760 / DSM 23089 / LMG 22485 / NCIMB 9086 / R18194 / 383).